A 152-amino-acid chain; its full sequence is Small ribosomal subunit protein uS5 (152 aa).

The S5 DRBM domain maps to 14–77 (FEEVIVNIGR…DDAHKNLVKV (64 aa)).

Belongs to the universal ribosomal protein uS5 family. In terms of assembly, part of the 30S ribosomal subunit. Contacts proteins S4 and S8.

With S4 and S12 plays an important role in translational accuracy. Functionally, located at the back of the 30S subunit body where it stabilizes the conformation of the head with respect to the body. The protein is Small ribosomal subunit protein uS5 of Sulfurovum sp. (strain NBC37-1).